Consider the following 412-residue polypeptide: Circumsporozoite protein (412 aa).

An N-terminal signal peptide occupies residues 1–18 (MMRKLAILSVSSFLFVEA). A disordered region spans residues 69 to 328 (SRSLGENDDG…KNNNNEEPSD (260 aa)). The span at 85 to 105 (NGREGKDEDKRDGNNEDNEKL) shows a compositional bias: basic and acidic residues. A required for the binding to heparan sulfate proteoglycans (HSPGs) on the surface of host hepatocytes region spans residues 104-111 (KLRKPKHK). Positions 112–116 (KLKQP) are region I; contains the proteolytic cleavage site. Positions 120 to 288 (NPDPNANPNV…PNANPNANPN (169 aa)) are enriched in low complexity. Tandem repeats lie at residues 123–126 (PNAN), 127–130 (PNVD), 131–134 (PNAN), 135–138 (PNVD), 139–142 (PNAN), 143–146 (PNVD), 147–150 (PNAN), 151–154 (PNAN), 155–158 (PNAN), 159–162 (PNAN), 163–166 (PNAN), 167–170 (PNAN), 171–174 (PNAN), 175–178 (PNAN), 179–182 (PNAN), 183–186 (PNAN), 187–190 (PNAN), 191–194 (PNAN), 195–198 (PNAN), 199–202 (PNAN), 203–206 (PNAN), 207–210 (PNVD), 211–214 (PNAN), 215–218 (PNAN), 219–222 (PNAN), 223–226 (PNAN), 227–230 (PNAN), 231–234 (PNAN), 235–238 (PNAN), 239–242 (PNAN), 243–246 (PNAN), 247–250 (PNAN), 251–254 (PNAN), 255–258 (PNAN), 259–262 (PNAN), 263–266 (PNAN), 267–270 (PNAN), 271–274 (PNAN), 275–278 (PNAN), 279–282 (PNAN), and 283–286 (PNAN). The 41 X 4 AA tandem repeats of P-N-[AV]-[ND] stretch occupies residues 123 to 286 (PNANPNVDPN…ANPNANPNAN (164 aa)). Over residues 289-304 (KNNQGNGQGHNMPNDP) the composition is skewed to polar residues. The span at 310–324 (ENANANNAVKNNNNE) shows a compositional bias: low complexity. The TSP type-1 domain occupies 337 to 390 (KIKNSISTEWSPCSVTCGNGIQVRIKPGSANKPKDELDYENDIEKKICKMEKCS). 2 disulfides stabilise this stretch: Cys-349/Cys-384 and Cys-353/Cys-389. O-linked (Fuc) threonine glycosylation is present at Thr-352. Cys-389 is lipidated: GPI-anchor amidated cysteine. A propeptide spans 390 to 412 (SSVFNVVNSSIGLIMVLSFLFLN) (removed in mature form).

The protein belongs to the plasmodium circumsporozoite protein family. Post-translationally, during host cell invasion, proteolytically cleaved at the cell membrane in the region I by a papain-like cysteine protease of parasite origin. Cleavage is triggered by the sporozoite contact with highly sulfated heparan sulfate proteoglycans (HSPGs) present on the host hepatocyte cell surface. Cleavage exposes the TSP type-1 (TSR) domain and is required for productive invasion of host hepatocytes but not for adhesion to the host cell membrane. Cleavage is dispensable for sporozoite development in the oocyst, motility and for traversal of host and vector cells. In terms of processing, O-glycosylated; maybe by POFUT2.

It localises to the cell membrane. It is found in the cytoplasm. Functionally, essential sporozoite protein. In the mosquito vector, required for sporozoite development in the oocyst, migration through the vector hemolymph and entry into the vector salivary glands. In the vertebrate host, required for sporozoite migration through the host dermis and infection of host hepatocytes. Binds to highly sulfated heparan sulfate proteoglycans (HSPGs) on the surface of host hepatocytes. In terms of biological role, in the vertebrate host, binds to highly sulfated heparan sulfate proteoglycans (HSPGs) on the surface of host hepatocytes and is required for sporozoite invasion of the host hepatocytes. The sequence is that of Circumsporozoite protein from Plasmodium falciparum.